The following is a 239-amino-acid chain: Ribonuclease PH (239 aa).

Phosphate is bound by residues Arg-87 and 125–127 (GTR).

Belongs to the RNase PH family. Homohexameric ring arranged as a trimer of dimers.

The catalysed reaction is tRNA(n+1) + phosphate = tRNA(n) + a ribonucleoside 5'-diphosphate. Phosphorolytic 3'-5' exoribonuclease that plays an important role in tRNA 3'-end maturation. Removes nucleotide residues following the 3'-CCA terminus of tRNAs; can also add nucleotides to the ends of RNA molecules by using nucleoside diphosphates as substrates, but this may not be physiologically important. Probably plays a role in initiation of 16S rRNA degradation (leading to ribosome degradation) during starvation. The polypeptide is Ribonuclease PH (Azotobacter vinelandii (strain DJ / ATCC BAA-1303)).